Consider the following 372-residue polypeptide: MHC class I-like protein MILL2 (372 aa).

The signal sequence occupies residues M1 to G26. Positions R28–G119 are alpha-1. 3 cysteine pairs are disulfide-bonded: C78–C89, C129–C191, and C230–C287. The segment at P120–G210 is alpha-2. 3 N-linked (GlcNAc...) asparagine glycosylation sites follow: N134, N234, and N293. One can recognise an Ig-like C1-type domain in the interval P192 to S302. Positions S211 to N339 are alpha-3. The interval W308–S349 is disordered. The segment covering Q317–V331 has biased composition (basic and acidic residues). A connecting peptide region spans residues A340 to S348. S349 carries the GPI-anchor amidated serine lipid modification. A propeptide spans C350–N372 (removed in mature form).

It belongs to the MHC class I family. Heterodimer with B2M. Ubiquitously expressed in neonatal and adult tissues.

The protein resides in the cell membrane. In terms of biological role, binds to heparan sulfate proteoglycans on the surface of fibroblast cells. The protein is MHC class I-like protein MILL2 of Rattus norvegicus (Rat).